The primary structure comprises 940 residues: Protein translocase subunit SecA 1 (940 aa).

ATP contacts are provided by residues Gln-83, Gly-101–Thr-105, and Asp-490. Positions Ala-856–Arg-940 are disordered.

The protein belongs to the SecA family. In terms of assembly, monomer and homodimer. Part of the essential Sec protein translocation apparatus which comprises SecA, SecYEG and auxiliary proteins SecDF. Other proteins may also be involved.

The protein localises to the cell membrane. It is found in the cytoplasm. It carries out the reaction ATP + H2O + cellular proteinSide 1 = ADP + phosphate + cellular proteinSide 2.. Functionally, part of the Sec protein translocase complex. Interacts with the SecYEG preprotein conducting channel. Has a central role in coupling the hydrolysis of ATP to the transfer of proteins into and across the cell membrane, serving as an ATP-driven molecular motor driving the stepwise translocation of polypeptide chains across the membrane. This Mycolicibacterium paratuberculosis (strain ATCC BAA-968 / K-10) (Mycobacterium paratuberculosis) protein is Protein translocase subunit SecA 1.